The chain runs to 342 residues: Autoinducer 2 import system permease protein LsrC (342 aa).

Over 1 to 13 (MLKFIQNNREITA) the chain is Periplasmic. Residues 14-34 (LLAVVLLFVLPGFLDRQYLSV) traverse the membrane as a helical segment. Residues 35-38 (QTLT) lie on the Cytoplasmic side of the membrane. Residues 39–59 (MVYSSAQILILLAMGATLVML) form a helical membrane-spanning segment. At 60 to 69 (TRNIDVSVGS) the chain is on the periplasmic side. Residues 70-90 (ITGMCAVLLGMLLNAGYSLPV) form a helical membrane-spanning segment. Residues 91–92 (AC) lie on the Cytoplasmic side of the membrane. A helical membrane pass occupies residues 93–113 (VATLLLGLLAGFFNGVLVAWL). Lysine 114 is a topological domain (periplasmic). The chain crosses the membrane as a helical span at residues 115-135 (IPAIVATLGTLGLYRGIMLLW). Over 136–154 (TGGKWIEGLPAELKQLSAP) the chain is Cytoplasmic. The chain crosses the membrane as a helical span at residues 155–175 (LLFGVSAIGWLTIILVAFMAW). The Periplasmic segment spans residues 176–212 (LLAKTAFGRSFYVTGDNLQGARQLGVRTEAIRIVAFS). Residues 213–233 (LNGCMAALAGIVFASQIGFIP) traverse the membrane as a helical segment. Residues 234–251 (NQTGTGLEMKAIAACVLG) lie on the Cytoplasmic side of the membrane. The chain crosses the membrane as a helical span at residues 252 to 272 (GISLLGGSGAIIGAVLGAWFL). Residues 273 to 283 (TQIDSVLVLLR) lie on the Periplasmic side of the membrane. A helical membrane pass occupies residues 284-304 (IPAWWNDFIAGMVLLAVLVFD). Over 305–342 (GRLRCALERNLRRQKYARFMMPPPPVKPASSGKKREAA) the chain is Cytoplasmic.

It belongs to the binding-protein-dependent transport system permease family. AraH/RbsC subfamily. In terms of assembly, the complex is composed of two ATP-binding proteins (LsrA), two transmembrane proteins (LsrC and LsrD) and a solute-binding protein (LsrB).

The protein resides in the cell inner membrane. In terms of biological role, part of the ABC transporter complex LsrABCD involved in autoinducer 2 (AI-2) import. Probably responsible for the translocation of the substrate across the membrane. The sequence is that of Autoinducer 2 import system permease protein LsrC (lsrC) from Escherichia coli (strain SMS-3-5 / SECEC).